We begin with the raw amino-acid sequence, 122 residues long: Large ribosomal subunit protein bL12 (122 aa).

Belongs to the bacterial ribosomal protein bL12 family. Homodimer. Part of the ribosomal stalk of the 50S ribosomal subunit. Forms a multimeric L10(L12)X complex, where L10 forms an elongated spine to which 2 to 4 L12 dimers bind in a sequential fashion. Binds GTP-bound translation factors.

Forms part of the ribosomal stalk which helps the ribosome interact with GTP-bound translation factors. Is thus essential for accurate translation. This is Large ribosomal subunit protein bL12 from Myxococcus xanthus (strain DK1622).